Reading from the N-terminus, the 113-residue chain is Iron-sulfur cluster insertion protein ErpA (113 aa).

Iron-sulfur cluster contacts are provided by cysteine 41, cysteine 105, and cysteine 107.

It belongs to the HesB/IscA family. As to quaternary structure, homodimer. Iron-sulfur cluster serves as cofactor.

Its function is as follows. Required for insertion of 4Fe-4S clusters for at least IspG. This chain is Iron-sulfur cluster insertion protein ErpA, found in Histophilus somni (strain 129Pt) (Haemophilus somnus).